A 404-amino-acid polypeptide reads, in one-letter code: NADH-quinone oxidoreductase subunit D 1 (404 aa).

It belongs to the complex I 49 kDa subunit family. In terms of assembly, NDH-1 is composed of 14 different subunits. Subunits NuoB, C, D, E, F, and G constitute the peripheral sector of the complex.

It localises to the cell membrane. It carries out the reaction a quinone + NADH + 5 H(+)(in) = a quinol + NAD(+) + 4 H(+)(out). NDH-1 shuttles electrons from NADH, via FMN and iron-sulfur (Fe-S) centers, to quinones in the respiratory chain. The immediate electron acceptor for the enzyme in this species is believed to be a menaquinone. Couples the redox reaction to proton translocation (for every two electrons transferred, four hydrogen ions are translocated across the cytoplasmic membrane), and thus conserves the redox energy in a proton gradient. This Symbiobacterium thermophilum (strain DSM 24528 / JCM 14929 / IAM 14863 / T) protein is NADH-quinone oxidoreductase subunit D 1.